The sequence spans 494 residues: Neuronal acetylcholine receptor subunit alpha-6 (494 aa).

Residues 1 to 31 form the signal peptide; sequence MHPKRRLCWCLPASGAWAFMLTSLIADTTAC. Residues 32-240 are Extracellular-facing; the sequence is ESEERLFHKL…TYSFYIRRLP (209 aa). Residues N54 and N171 are each glycosylated (N-linked (GlcNAc...) asparagine). C158 and C172 are oxidised to a cystine. The next 3 helical transmembrane spans lie at 241–265, 272–290, and 306–327; these read MFYT…FYLP, VTLC…LVIT, and YLLF…VLNI. Residues 328–468 are Cytoplasmic-facing; that stretch reads HYRTPTTHTM…WKYVAMVIDR (141 aa). The interval 364–390 is disordered; sequence KNISKKTKKGSAKTSGKSKHSKHKDNK. The span at 366–390 shows a compositional bias: basic residues; it reads ISKKTKKGSAKTSGKSKHSKHKDNK. Residues 469–489 traverse the membrane as a helical segment; that stretch reads VFLWVFIILCVFGTAGLFIQP.

Belongs to the ligand-gated ion channel (TC 1.A.9) family. Acetylcholine receptor (TC 1.A.9.1) subfamily. Alpha-6/CHRNA6 sub-subfamily. In terms of assembly, neuronal AChR is composed of two different types of subunits: alpha and non-alpha (beta). CHRNA6/alpha-6 subunit can be combined to CHRNB2/beta-2, CHRNA4/alpha-4 and CHRNB3/beta-3 to give rise to functional receptors. Heteropentamers containing CHRNB3 have an stoichiometry of (CHRNA6:CHRNB2)2:CHRNB3. Interacts with LYPD6.

The protein resides in the synaptic cell membrane. It catalyses the reaction K(+)(in) = K(+)(out). It carries out the reaction Na(+)(in) = Na(+)(out). The enzyme catalyses Ca(2+)(in) = Ca(2+)(out). Its activity is regulated as follows. Activated by a myriad of ligands such as acetylcholine, cytisine and nicotine. CHRNA6 nAChR activity is inhibited by the antagonists alpha-conotoxin MII and PIA, a small disulfide-constrained peptides from cone snails. In terms of biological role, component of neuronal acetylcholine receptors (nAChRs) that function as pentameric, ligand-gated cation channels with high calcium permeability among other activities. nAChRs are excitatory neurotrasnmitter receptors formed by a collection of nAChR subunits known to mediate synaptic transmission in the nervous system and the neuromuscular junction. Each nAchR subunit confers differential attributes to channel properties, including activation, deactivation and desensitization kinetics, pH sensitivity, cation permeability, and binding to allosteric modulators. CHRNA6 forms pentameric channels with CHRNB2 and CHRNA4 that exhibit high sensitivity to ACh and nicotine and are predominantly expressed in only a few brain areas, including dopaminergic neurons, norepirephrine neurons and cells of the visual system. nAChrs containing CHRNA6 subunits mediate endogenous cholinergic modulation of dopamine and gamma-aminobutyric acid (GABA) release in response to nicotine at nerve terminals. Functionally, component of neuronal acetylcholine receptors (nAChRs) that function as pentameric, ligand-gated cation channels with high calcium permeability among other activities. nAChRs are excitatory neurotrasnmitter receptors formed by a collection of nAChR subunits known to mediate synaptic transmission in the nervous system and the neuromuscular junction. Each nAchR subunit confers differential attributes to channel properties, including activation, deactivation and desensitization kinetics, pH sensitivity, cation permeability, and binding to allosteric modulators. CHRNA6 forms pentameric channels with CHRNB2, CHRNB3 and CHRNA4 that exhibit high sensitivity to ACh and nicotine and are predominantly expressed in only a few brain areas, including dopaminergic neurons, norepirephrine neurons and cells of the visual system. nAChrs containing CHRNA6 subunits mediate endogenous cholinergic modulation of dopamine and gamma-aminobutyric acid (GABA) release in response to nicotine at nerve terminals. This is Neuronal acetylcholine receptor subunit alpha-6 (CHRNA6) from Gallus gallus (Chicken).